Consider the following 750-residue polypeptide: Photosystem I P700 chlorophyll a apoprotein A1 (750 aa).

Helical transmembrane passes span 70 to 93 (VFSA…FHGA), 156 to 179 (LYCT…FHYH), 195 to 219 (LNHH…HVSL), 291 to 309 (IAHH…GHMY), 346 to 369 (WHAQ…HHMY), 385 to 411 (LSLF…IFMV), 433 to 455 (AIIS…LYIH), and 531 to 549 (FLVH…LILL). Cys573 and Cys582 together coordinate [4Fe-4S] cluster. The next 2 helical transmembrane spans lie at 589–610 (HVFL…HFSW) and 664–686 (LSAY…MFLF). His675 lines the chlorophyll a' pocket. Residues Met683 and Tyr691 each contribute to the chlorophyll a site. Trp692 is a binding site for phylloquinone. A helical membrane pass occupies residues 724–744 (AVGVTHYLLGGIATTWAFFLA).

Belongs to the PsaA/PsaB family. In terms of assembly, the PsaA/B heterodimer binds the P700 chlorophyll special pair and subsequent electron acceptors. PSI consists of a core antenna complex that captures photons, and an electron transfer chain that converts photonic excitation into a charge separation. The eukaryotic PSI reaction center is composed of at least 11 subunits. Requires P700 is a chlorophyll a/chlorophyll a' dimer, A0 is one or more chlorophyll a, A1 is one or both phylloquinones and FX is a shared 4Fe-4S iron-sulfur center. as cofactor.

The protein localises to the plastid. Its subcellular location is the chloroplast thylakoid membrane. It carries out the reaction reduced [plastocyanin] + hnu + oxidized [2Fe-2S]-[ferredoxin] = oxidized [plastocyanin] + reduced [2Fe-2S]-[ferredoxin]. In terms of biological role, psaA and PsaB bind P700, the primary electron donor of photosystem I (PSI), as well as the electron acceptors A0, A1 and FX. PSI is a plastocyanin-ferredoxin oxidoreductase, converting photonic excitation into a charge separation, which transfers an electron from the donor P700 chlorophyll pair to the spectroscopically characterized acceptors A0, A1, FX, FA and FB in turn. Oxidized P700 is reduced on the lumenal side of the thylakoid membrane by plastocyanin. The sequence is that of Photosystem I P700 chlorophyll a apoprotein A1 from Eucalyptus globulus subsp. globulus (Tasmanian blue gum).